The primary structure comprises 573 residues: Trehalose synthase (573 aa).

Asp70 contributes to the substrate binding site. Asn112 contributes to the Ca(2+) binding site. Substrate-binding residues include His113 and Gln178. Asp180 lines the Ca(2+) pocket. Residue Arg208 participates in substrate binding. Residue Asp210 is the Nucleophile of the active site. Positions 214, 215, and 217 each coordinate Ca(2+). The active-site Proton donor is Glu252. Substrate-binding residues include His326 and Asp327.

This sequence belongs to the glycosyl hydrolase 13 family. TreS subfamily.

The enzyme catalyses D-maltose = alpha,alpha-trehalose. Its function is as follows. Catalyzes the reversible interconversion of maltose and alpha,alpha-trehalose by transglucosylation. The sequence is that of Trehalose synthase (treS) from Pimelobacter sp. (strain R48).